Reading from the N-terminus, the 433-residue chain is Arrestin domain-containing protein 1 (433 aa).

Disordered regions lie at residues 296-322 (GLGL…AEAA) and 349-372 (LSSV…PLHP). Residues 301–312 (PGAPPLVVPSAP) are compositionally biased toward pro residues. 2 short sequence motifs (PPxY motif) span residues 402–405 (PPEY) and 415–418 (PPSY).

It belongs to the arrestin family. In terms of assembly, interacts (via PPxY motifs) with ITCH (via WW domains); the interaction is direct and participates in the recruitment of the ubiquitin-protein ligase ITCH to the NOTCH1 receptor. Interacts with ARRB1 and ARRB2; the interaction is direct. Interacts with TSG101; may recruit TSG101 to the plasma membrane. Interacts (via PPxY motifs) with WWP2 (via WW domains); ubiquitinates ARRDC1. Interacts with SLC11A2; controls the incorporation of SLC11A2 into extracellular vesicles through an ubiquitination-dependent mechanism. Interacts with WWP1 (via WW domains). Interacts with NEDD4 (via WW domains). Interacts with PDCD6IP. In terms of processing, ubiquitinated. Ubiquitination by WWP2; promotes localization to extracellular microvesicles. Ubiquitinated by WWP1.

Its subcellular location is the cell membrane. In terms of biological role, functions as an adapter recruiting ubiquitin-protein ligases to their specific substrates. Through an ubiquitination-dependent mechanism plays for instance a role in the incorporation of SLC11A2 into extracellular vesicles. More generally, plays a role in the extracellular transport of proteins between cells through the release in the extracellular space of microvesicles. By participating in the ITCH-mediated ubiquitination and subsequent degradation of NOTCH1, negatively regulates the NOTCH signaling pathway. In Homo sapiens (Human), this protein is Arrestin domain-containing protein 1.